The chain runs to 363 residues: UDP-3-O-acylglucosamine N-acyltransferase (363 aa).

His-259 functions as the Proton acceptor in the catalytic mechanism.

Belongs to the transferase hexapeptide repeat family. LpxD subfamily. As to quaternary structure, homotrimer.

It catalyses the reaction a UDP-3-O-[(3R)-3-hydroxyacyl]-alpha-D-glucosamine + a (3R)-hydroxyacyl-[ACP] = a UDP-2-N,3-O-bis[(3R)-3-hydroxyacyl]-alpha-D-glucosamine + holo-[ACP] + H(+). Its pathway is bacterial outer membrane biogenesis; LPS lipid A biosynthesis. Functionally, catalyzes the N-acylation of UDP-3-O-acylglucosamine using 3-hydroxyacyl-ACP as the acyl donor. Is involved in the biosynthesis of lipid A, a phosphorylated glycolipid that anchors the lipopolysaccharide to the outer membrane of the cell. This chain is UDP-3-O-acylglucosamine N-acyltransferase, found in Ruegeria pomeroyi (strain ATCC 700808 / DSM 15171 / DSS-3) (Silicibacter pomeroyi).